The chain runs to 76 residues: VpAmp1.0 (76 aa).

An N-terminal signal peptide occupies residues 1–22 (MKLINLVPVFFVLIIVVDYCHS). Residue I41 is modified to Isoleucine amide. Residues 42–76 (GKRSVESQRYVDLNRRDLEQDLQELQDFLDQISEH) constitute a propeptide that is removed on maturation.

The protein belongs to the non-disulfide-bridged peptide (NDBP) superfamily. Short antimicrobial peptide (group 4) family. In terms of tissue distribution, expressed by the venom gland.

The protein resides in the secreted. It is found in the target cell membrane. Antimicrobial peptide with potent activity against Gram-positive bacteria S.aureus (MIC=2.5 uM) and S.agalactiaea (MIC=2.5 uM), and Gram-negative bacteria E.coli (MIC=24 uM) and P.aeruginosa (MIC=2.5 uM), as well as against yeasts Candida albicans (MIC=6.25 uM) and C.glabrata (MIC&gt;50 uM). Also elicits high hemolysis on human erythrocytes (HC(50)=9.2 uM). This Mesomexovis punctatus (Scorpion) protein is VpAmp1.0.